The chain runs to 261 residues: 3-deoxy-manno-octulosonate cytidylyltransferase (261 aa).

It belongs to the KdsB family.

The protein localises to the cytoplasm. The enzyme catalyses 3-deoxy-alpha-D-manno-oct-2-ulosonate + CTP = CMP-3-deoxy-beta-D-manno-octulosonate + diphosphate. Its pathway is nucleotide-sugar biosynthesis; CMP-3-deoxy-D-manno-octulosonate biosynthesis; CMP-3-deoxy-D-manno-octulosonate from 3-deoxy-D-manno-octulosonate and CTP: step 1/1. It participates in bacterial outer membrane biogenesis; lipopolysaccharide biosynthesis. In terms of biological role, activates KDO (a required 8-carbon sugar) for incorporation into bacterial lipopolysaccharide in Gram-negative bacteria. This Dechloromonas aromatica (strain RCB) protein is 3-deoxy-manno-octulosonate cytidylyltransferase.